The sequence spans 277 residues: Probable cyclic nucleotide phosphodiesterase MCR_0369 (277 aa).

The Fe cation site is built by aspartate 17, histidine 19, aspartate 53, asparagine 83, histidine 165, histidine 204, and histidine 206. Residues histidine 19, aspartate 53, and 83-84 contribute to the AMP site; that span reads NH. Residue histidine 206 participates in AMP binding.

This sequence belongs to the cyclic nucleotide phosphodiesterase class-III family. Fe(2+) serves as cofactor.

The sequence is that of Probable cyclic nucleotide phosphodiesterase MCR_0369 from Moraxella catarrhalis (strain BBH18).